Here is a 317-residue protein sequence, read N- to C-terminus: Acetyl-coenzyme A carboxylase carboxyl transferase subunit alpha (317 aa).

The region spanning 38-292 (TLEERLARLE…DNIIKQSLVE (255 aa)) is the CoA carboxyltransferase C-terminal domain.

Belongs to the AccA family. Acetyl-CoA carboxylase is a heterohexamer composed of biotin carboxyl carrier protein (AccB), biotin carboxylase (AccC) and two subunits each of ACCase subunit alpha (AccA) and ACCase subunit beta (AccD).

It is found in the cytoplasm. The enzyme catalyses N(6)-carboxybiotinyl-L-lysyl-[protein] + acetyl-CoA = N(6)-biotinyl-L-lysyl-[protein] + malonyl-CoA. Its pathway is lipid metabolism; malonyl-CoA biosynthesis; malonyl-CoA from acetyl-CoA: step 1/1. Component of the acetyl coenzyme A carboxylase (ACC) complex. First, biotin carboxylase catalyzes the carboxylation of biotin on its carrier protein (BCCP) and then the CO(2) group is transferred by the carboxyltransferase to acetyl-CoA to form malonyl-CoA. In Oceanobacillus iheyensis (strain DSM 14371 / CIP 107618 / JCM 11309 / KCTC 3954 / HTE831), this protein is Acetyl-coenzyme A carboxylase carboxyl transferase subunit alpha.